The primary structure comprises 364 residues: DNA polymerase IV (364 aa).

In terms of domain architecture, UmuC spans 6-194; the sequence is VFHIDFDYFY…LKIRDIPGIG (189 aa). Mg(2+) contacts are provided by Asp10 and Asp111. The active site involves Glu112.

Belongs to the DNA polymerase type-Y family. In terms of assembly, monomer. Mg(2+) serves as cofactor.

It localises to the cytoplasm. The catalysed reaction is DNA(n) + a 2'-deoxyribonucleoside 5'-triphosphate = DNA(n+1) + diphosphate. Poorly processive, error-prone DNA polymerase involved in untargeted mutagenesis. Copies undamaged DNA at stalled replication forks, which arise in vivo from mismatched or misaligned primer ends. These misaligned primers can be extended by PolIV. Exhibits no 3'-5' exonuclease (proofreading) activity. May be involved in translesional synthesis. This Nitrosopumilus maritimus (strain SCM1) protein is DNA polymerase IV.